A 261-amino-acid polypeptide reads, in one-letter code: Pantothenate synthetase (261 aa).

An ATP-binding site is contributed by 29 to 36; the sequence is MGALHNGH. The Proton donor role is filled by His-36. Gln-60 provides a ligand contact to (R)-pantoate. Gln-60 lines the beta-alanine pocket. Residue 147-150 participates in ATP binding; that stretch reads GEKD. Position 153 (Gln-153) interacts with (R)-pantoate. 184–187 is a binding site for ATP; that stretch reads LSSR.

Belongs to the pantothenate synthetase family. Homodimer.

It is found in the cytoplasm. It carries out the reaction (R)-pantoate + beta-alanine + ATP = (R)-pantothenate + AMP + diphosphate + H(+). It functions in the pathway cofactor biosynthesis; (R)-pantothenate biosynthesis; (R)-pantothenate from (R)-pantoate and beta-alanine: step 1/1. In terms of biological role, catalyzes the condensation of pantoate with beta-alanine in an ATP-dependent reaction via a pantoyl-adenylate intermediate. This is Pantothenate synthetase from Francisella tularensis subsp. holarctica (strain FTNF002-00 / FTA).